The following is a 212-amino-acid chain: Vesicle transport protein SFT2C (212 aa).

Residues 1–78 (MADLHRQLQD…TRGQRLVAGG (78 aa)) are Cytoplasmic-facing. The helical transmembrane segment at 79 to 99 (LCLLLAALCFGLAALYAPVLL) threads the bilayer. The Lumenal segment spans residues 100–104 (LRARK). A helical membrane pass occupies residues 105–125 (FALLWSLGSVLAWASAALLRG). The Cytoplasmic segment spans residues 126-142 (GPACGRLLRGEETPSRS). The helical transmembrane segment at 143-165 (TLGYAAALGATLYAALVLRSTVL) threads the bilayer. The Lumenal portion of the chain corresponds to 166–174 (TALGACAQV). A helical membrane pass occupies residues 175–197 (AALLYALIGLLPWGGVTALRLAL). At 198–212 (GRLNRGTGLANALPV) the chain is on the cytoplasmic side.

It belongs to the SFT2 family.

It localises to the membrane. In terms of biological role, may be involved in fusion of retrograde transport vesicles derived from an endocytic compartment with the Golgi complex. This Mus musculus (Mouse) protein is Vesicle transport protein SFT2C.